Reading from the N-terminus, the 76-residue chain is Protein CASC2, isoforms 1/2 (76 aa).

A disordered region spans residues 1 to 20; sequence MAGTRGLMLLGPGPVAGPRD.

This Homo sapiens (Human) protein is Protein CASC2, isoforms 1/2 (CASC2).